We begin with the raw amino-acid sequence, 120 residues long: Transcription elongation factor 1 homolog (120 aa).

4 residues coordinate Zn(2+): Cys25, Cys28, Cys49, and Cys52. The span at 84–110 (EDDVVQEEEEEVEEEEEEEEEEDDEDD) shows a compositional bias: acidic residues. Residues 84-120 (EDDVVQEEEEEVEEEEEEEEEEDDEDDHVSVKRKYNF) form a disordered region.

It belongs to the ELOF1 family.

The protein localises to the nucleus. Its function is as follows. Transcription elongation factor implicated in the maintenance of proper chromatin structure in actively transcribed regions. The sequence is that of Transcription elongation factor 1 homolog from Arabidopsis thaliana (Mouse-ear cress).